The chain runs to 494 residues: Probable cytochrome P450 313a4 (494 aa).

Cys-440 contributes to the heme binding site.

This sequence belongs to the cytochrome P450 family. The cofactor is heme.

The protein resides in the endoplasmic reticulum membrane. It localises to the microsome membrane. Functionally, may be involved in the metabolism of insect hormones and in the breakdown of synthetic insecticides. The sequence is that of Probable cytochrome P450 313a4 (Cyp313a4) from Drosophila melanogaster (Fruit fly).